The chain runs to 184 residues: Peptide deformylase (184 aa).

Fe cation is bound by residues Cys96 and His138. Residue Glu139 is part of the active site. Residue His142 participates in Fe cation binding.

The protein belongs to the polypeptide deformylase family. Fe(2+) serves as cofactor.

The catalysed reaction is N-terminal N-formyl-L-methionyl-[peptide] + H2O = N-terminal L-methionyl-[peptide] + formate. In terms of biological role, removes the formyl group from the N-terminal Met of newly synthesized proteins. Requires at least a dipeptide for an efficient rate of reaction. N-terminal L-methionine is a prerequisite for activity but the enzyme has broad specificity at other positions. In Cytophaga hutchinsonii (strain ATCC 33406 / DSM 1761 / CIP 103989 / NBRC 15051 / NCIMB 9469 / D465), this protein is Peptide deformylase.